Consider the following 260-residue polypeptide: Flap endonuclease Xni (260 aa).

Residue D104 participates in Mg(2+) binding. A 5'-3' exonuclease domain is found at 160–250 (VSPQQLTDYW…NGNLQQLRLP (91 aa)). Residues L171, A172, P180, V182, and I185 each contribute to the K(+) site. Residues 184 to 189 (GIGPKS) are interaction with DNA.

Belongs to the Xni family. It depends on Mg(2+) as a cofactor. Requires K(+) as cofactor.

Has flap endonuclease activity. During DNA replication, flap endonucleases cleave the 5'-overhanging flap structure that is generated by displacement synthesis when DNA polymerase encounters the 5'-end of a downstream Okazaki fragment. The sequence is that of Flap endonuclease Xni from Pectobacterium atrosepticum (strain SCRI 1043 / ATCC BAA-672) (Erwinia carotovora subsp. atroseptica).